A 333-amino-acid chain; its full sequence is Holliday junction branch migration complex subunit RuvB (333 aa).

Residues 1–182 (MDERLVSGSA…FGVISRLEYY (182 aa)) are large ATPase domain (RuvB-L). ATP-binding positions include Leu21, Arg22, Gly63, Lys66, Thr67, Thr68, 129–131 (EDY), Arg172, Tyr182, and Arg219. Residue Thr67 coordinates Mg(2+). Residues 183–253 (QVDQLAQIIE…LAVEALERLQ (71 aa)) form a small ATPAse domain (RuvB-S) region. Residues 256–333 (RLGLDHIDHK…AHLGMEVPKR (78 aa)) form a head domain (RuvB-H) region. DNA contacts are provided by Arg311 and Arg316.

Belongs to the RuvB family. Homohexamer. Forms an RuvA(8)-RuvB(12)-Holliday junction (HJ) complex. HJ DNA is sandwiched between 2 RuvA tetramers; dsDNA enters through RuvA and exits via RuvB. An RuvB hexamer assembles on each DNA strand where it exits the tetramer. Each RuvB hexamer is contacted by two RuvA subunits (via domain III) on 2 adjacent RuvB subunits; this complex drives branch migration. In the full resolvosome a probable DNA-RuvA(4)-RuvB(12)-RuvC(2) complex forms which resolves the HJ.

It localises to the cytoplasm. The enzyme catalyses ATP + H2O = ADP + phosphate + H(+). In terms of biological role, the RuvA-RuvB-RuvC complex processes Holliday junction (HJ) DNA during genetic recombination and DNA repair, while the RuvA-RuvB complex plays an important role in the rescue of blocked DNA replication forks via replication fork reversal (RFR). RuvA specifically binds to HJ cruciform DNA, conferring on it an open structure. The RuvB hexamer acts as an ATP-dependent pump, pulling dsDNA into and through the RuvAB complex. RuvB forms 2 homohexamers on either side of HJ DNA bound by 1 or 2 RuvA tetramers; 4 subunits per hexamer contact DNA at a time. Coordinated motions by a converter formed by DNA-disengaged RuvB subunits stimulates ATP hydrolysis and nucleotide exchange. Immobilization of the converter enables RuvB to convert the ATP-contained energy into a lever motion, pulling 2 nucleotides of DNA out of the RuvA tetramer per ATP hydrolyzed, thus driving DNA branch migration. The RuvB motors rotate together with the DNA substrate, which together with the progressing nucleotide cycle form the mechanistic basis for DNA recombination by continuous HJ branch migration. Branch migration allows RuvC to scan DNA until it finds its consensus sequence, where it cleaves and resolves cruciform DNA. The polypeptide is Holliday junction branch migration complex subunit RuvB (Geobacillus thermodenitrificans (strain NG80-2)).